The sequence spans 111 residues: uncharacterized protein (111 aa).

The segment at 43–72 is disordered; it reads NGRAEETEADAPLPEEPSLPDLPDLSDLDS. Positions 61 to 72 are enriched in low complexity; the sequence is LPDLPDLSDLDS.

This is an uncharacterized protein from Homo sapiens (Human).